A 429-amino-acid chain; its full sequence is Glutamate-1-semialdehyde 2,1-aminomutase 2 (429 aa).

N6-(pyridoxal phosphate)lysine is present on K268.

This sequence belongs to the class-III pyridoxal-phosphate-dependent aminotransferase family. HemL subfamily. In terms of assembly, homodimer. Pyridoxal 5'-phosphate is required as a cofactor.

It is found in the cytoplasm. It catalyses the reaction (S)-4-amino-5-oxopentanoate = 5-aminolevulinate. It participates in porphyrin-containing compound metabolism; protoporphyrin-IX biosynthesis; 5-aminolevulinate from L-glutamyl-tRNA(Glu): step 2/2. The sequence is that of Glutamate-1-semialdehyde 2,1-aminomutase 2 from Geobacillus kaustophilus (strain HTA426).